Here is a 2241-residue protein sequence, read N- to C-terminus: Large tegument protein deneddylase (2241 aa).

The interval 1 to 238 (MKVTQASCHQ…IDLTGVVRES (238 aa)) is deubiquitination activity. One can recognise a Peptidase C76 domain in the interval 4 to 226 (TQASCHQGDI…AARLVSTYRD (223 aa)). Residues Cys-24, Asp-160, and His-162 contribute to the active site. Positions 239-314 (ADTAATTTTA…STTSKTLATA (76 aa)) are disordered. Positions 240–250 (DTAATTTTAAP) are enriched in low complexity. A compositionally biased stretch (pro residues) spans 251-268 (SLPPLPDPIVDPGCPPGV). Positions 304-314 (PSTTSKTLATA) are enriched in low complexity. The segment at 327–331 (SSAVP) is interaction with inner tegument protein. Disordered regions lie at residues 1187–1230 (MTET…PPAD) and 2118–2152 (PIAR…DTSR). 2 stretches are compositionally biased toward basic and acidic residues: residues 1190 to 1199 (TSERLDRSLR) and 2142 to 2152 (QIDHAQDDTSR).

The protein belongs to the herpesviridae large tegument protein family. As to quaternary structure, interacts with host CUL1 and CUL4A; these interactions inhibit the E3 ligase activity of cullins. Interacts with inner tegument protein. Interacts with capsid vertex specific component CVC2. Interacts with the major capsid protein/MCP.

Its subcellular location is the virion tegument. The protein resides in the host cytoplasm. The protein localises to the host nucleus. It catalyses the reaction Thiol-dependent hydrolysis of ester, thioester, amide, peptide and isopeptide bonds formed by the C-terminal Gly of ubiquitin (a 76-residue protein attached to proteins as an intracellular targeting signal).. Large tegument protein that plays multiple roles in the viral cycle. During viral entry, remains associated with the capsid while most of the tegument is detached and participates in the capsid transport toward the host nucleus. Plays a role in the routing of the capsid at the nuclear pore complex and subsequent uncoating. Within the host nucleus, acts as a deneddylase and promotes the degradation of nuclear CRLs (cullin-RING ubiquitin ligases) and thereby stabilizes nuclear CRL substrates, while cytoplasmic CRLs remain unaffected. These modifications prevent host cell cycle S-phase progression and create a favorable environment allowing efficient viral genome replication. Participates later in the secondary envelopment of capsids. Indeed, plays a linker role for the association of the outer viral tegument to the capsids together with the inner tegument protein. This is Large tegument protein deneddylase (UL48) from Homo sapiens (Human).